The following is a 308-amino-acid chain: Protein UL135 (308 aa).

The signal sequence occupies residues 1–22 (MVWLWLGVGLLGGTGLASLVLA). Residues 105–274 (KPEFPPARFE…TEPTTLPIVS (170 aa)) form a disordered region. Positions 126 to 145 (SIGRSPSHCSSSSSLSSSAS) are enriched in low complexity. Pro residues-rich tracts occupy residues 152–163 (QPPPSWKPPPPP) and 219–238 (PVTPRPFPKTPTPQKPPRNP).

This sequence belongs to the HCMV UL135 family. In terms of assembly, interacts with host components of the WAVE2 complex ABI1, NAP1 and WAVE2. Also interacts with host ABI2 and TLN1.

Its subcellular location is the host cell membrane. The protein resides in the host Golgi apparatus. Functionally, remodels the host actin cytoskeleton in order to impair immune recognition of infected cells. Mechanistically, interacts with members of the host WAVE2 complex and redirects the complex to the plasma membrane. In turn, the efficiency of immune synapse formation is greatly reduced. The chain is Protein UL135 (UL135) from Human cytomegalovirus (strain Merlin) (HHV-5).